Consider the following 296-residue polypeptide: Phosphatidylserine decarboxylase proenzyme (296 aa).

Residues D113, H169, and S256 each act as charge relay system; for autoendoproteolytic cleavage activity in the active site. The active-site Schiff-base intermediate with substrate; via pyruvic acid; for decarboxylase activity is the S256. S256 is subject to Pyruvic acid (Ser); by autocatalysis.

This sequence belongs to the phosphatidylserine decarboxylase family. PSD-B subfamily. Prokaryotic type II sub-subfamily. In terms of assembly, heterodimer of a large membrane-associated beta subunit and a small pyruvoyl-containing alpha subunit. Pyruvate is required as a cofactor. In terms of processing, is synthesized initially as an inactive proenzyme. Formation of the active enzyme involves a self-maturation process in which the active site pyruvoyl group is generated from an internal serine residue via an autocatalytic post-translational modification. Two non-identical subunits are generated from the proenzyme in this reaction, and the pyruvate is formed at the N-terminus of the alpha chain, which is derived from the carboxyl end of the proenzyme. The autoendoproteolytic cleavage occurs by a canonical serine protease mechanism, in which the side chain hydroxyl group of the serine supplies its oxygen atom to form the C-terminus of the beta chain, while the remainder of the serine residue undergoes an oxidative deamination to produce ammonia and the pyruvoyl prosthetic group on the alpha chain. During this reaction, the Ser that is part of the protease active site of the proenzyme becomes the pyruvoyl prosthetic group, which constitutes an essential element of the active site of the mature decarboxylase.

It localises to the cell membrane. The catalysed reaction is a 1,2-diacyl-sn-glycero-3-phospho-L-serine + H(+) = a 1,2-diacyl-sn-glycero-3-phosphoethanolamine + CO2. Its pathway is phospholipid metabolism; phosphatidylethanolamine biosynthesis; phosphatidylethanolamine from CDP-diacylglycerol: step 2/2. Functionally, catalyzes the formation of phosphatidylethanolamine (PtdEtn) from phosphatidylserine (PtdSer). This Clostridium botulinum (strain Alaska E43 / Type E3) protein is Phosphatidylserine decarboxylase proenzyme.